The sequence spans 90 residues: Small ribosomal subunit protein bS20 (90 aa).

This sequence belongs to the bacterial ribosomal protein bS20 family.

Its function is as follows. Binds directly to 16S ribosomal RNA. This is Small ribosomal subunit protein bS20 from Francisella tularensis subsp. holarctica (strain FTNF002-00 / FTA).